The chain runs to 442 residues: tRNA modification GTPase MnmE (442 aa).

Residues Arg21, Glu79, and Lys118 each contribute to the (6S)-5-formyl-5,6,7,8-tetrahydrofolate site. The region spanning 214–367 (GFKIAIVGKP…LKEELQNYLN (154 aa)) is the TrmE-type G domain. Asn224 contributes to the K(+) binding site. Residues 224–229 (NVGKSS), 243–249 (SDIAGTT), and 268–271 (DTAG) contribute to the GTP site. Position 228 (Ser228) interacts with Mg(2+). Residues Ser243, Ile245, and Thr248 each coordinate K(+). Thr249 is a binding site for Mg(2+). Residue Lys442 coordinates (6S)-5-formyl-5,6,7,8-tetrahydrofolate.

This sequence belongs to the TRAFAC class TrmE-Era-EngA-EngB-Septin-like GTPase superfamily. TrmE GTPase family. As to quaternary structure, homodimer. Heterotetramer of two MnmE and two MnmG subunits. It depends on K(+) as a cofactor.

The protein localises to the cytoplasm. Exhibits a very high intrinsic GTPase hydrolysis rate. Involved in the addition of a carboxymethylaminomethyl (cmnm) group at the wobble position (U34) of certain tRNAs, forming tRNA-cmnm(5)s(2)U34. The sequence is that of tRNA modification GTPase MnmE from Campylobacter jejuni subsp. jejuni serotype O:2 (strain ATCC 700819 / NCTC 11168).